The chain runs to 117 residues: Large ribosomal subunit protein bL20 (117 aa).

It belongs to the bacterial ribosomal protein bL20 family.

Its function is as follows. Binds directly to 23S ribosomal RNA and is necessary for the in vitro assembly process of the 50S ribosomal subunit. It is not involved in the protein synthesizing functions of that subunit. The protein is Large ribosomal subunit protein bL20 of Leptospira borgpetersenii serovar Hardjo-bovis (strain JB197).